Reading from the N-terminus, the 77-residue chain is Inhibitor of histone-like protein HU (77 aa).

As to quaternary structure, interacts with host homodimeric histone-like protein (HU) hupA; thereby replacing dsDNA from the HU-DNA complex.

In terms of biological role, acts as a host growth inhibitor by inhibiting DNA-binding of microbial histone-like protein HU, thereby preventing chromosome segregation and causing filamentous cell morphology and growth defects in the host. This chain is Inhibitor of histone-like protein HU, found in Bacillus phage SP01 (Bacteriophage SP01).